The primary structure comprises 473 residues: Photosystem II CP43 reaction center protein (473 aa).

The propeptide occupies 1–14; it reads MKTLYSLRRFYHVE. Thr15 carries the post-translational modification N-acetylthreonine. Residue Thr15 is modified to Phosphothreonine. 5 consecutive transmembrane segments (helical) span residues 69-93, 134-155, 178-200, 255-275, and 291-312; these read LFEVAHFVPEKPMYEQGLILLPHLA, LLGPETLEESFPFFGYVWKDRN, KALYFGGVYDTWAPGGGDVRKIT, KPFAWARRALVWSGEAYLSYS, and WFNNTAYPSEFYGPTGPEASQA. Glu367 is a binding site for [CaMn4O5] cluster. The chain crosses the membrane as a helical span at residues 447-471; the sequence is RARAAAAGFEKGIDRDFEPVLSMTP.

This sequence belongs to the PsbB/PsbC family. PsbC subfamily. In terms of assembly, PSII is composed of 1 copy each of membrane proteins PsbA, PsbB, PsbC, PsbD, PsbE, PsbF, PsbH, PsbI, PsbJ, PsbK, PsbL, PsbM, PsbT, PsbX, PsbY, PsbZ, Psb30/Ycf12, at least 3 peripheral proteins of the oxygen-evolving complex and a large number of cofactors. It forms dimeric complexes. Requires Binds multiple chlorophylls and provides some of the ligands for the Ca-4Mn-5O cluster of the oxygen-evolving complex. It may also provide a ligand for a Cl- that is required for oxygen evolution. PSII binds additional chlorophylls, carotenoids and specific lipids. as cofactor.

Its subcellular location is the plastid. It is found in the chloroplast thylakoid membrane. Functionally, one of the components of the core complex of photosystem II (PSII). It binds chlorophyll and helps catalyze the primary light-induced photochemical processes of PSII. PSII is a light-driven water:plastoquinone oxidoreductase, using light energy to abstract electrons from H(2)O, generating O(2) and a proton gradient subsequently used for ATP formation. In Arabis hirsuta (Hairy rock-cress), this protein is Photosystem II CP43 reaction center protein.